The sequence spans 657 residues: Probable potassium transport system protein Kup (657 aa).

Transmembrane regions (helical) follow at residues 15-35, 48-68, 100-120, 147-167, 173-193, 219-239, 251-271, 292-312, 348-368, 378-398, 403-423, and 431-451; these read SFLI…LYVM, ITPD…TLLT, WLII…MLTP, IIII…HFGT, IFGP…IVNL, LGFF…ALYS, LTWP…AAWI, MMPS…AIIA, IYMP…VLYF, YGLS…NYLL, PLPI…SFLI, and KGGF…YIWI.

This sequence belongs to the HAK/KUP transporter (TC 2.A.72) family.

Its subcellular location is the cell membrane. The catalysed reaction is K(+)(in) + H(+)(in) = K(+)(out) + H(+)(out). Functionally, transport of potassium into the cell. Likely operates as a K(+):H(+) symporter. This Clostridium perfringens (strain SM101 / Type A) protein is Probable potassium transport system protein Kup.